A 310-amino-acid polypeptide reads, in one-letter code: Probable metallo-hydrolase Mb2322c (310 aa).

A disordered region spans residues 1–29 (MVATRGRPCPTNFSRPQRPRVAGNGTKSQ). Histidine 137, aspartate 139, aspartate 141, histidine 142, histidine 221, aspartate 242, and histidine 288 together coordinate Zn(2+).

The protein belongs to the metallo-beta-lactamase superfamily. The cofactor is Zn(2+).

This chain is Probable metallo-hydrolase Mb2322c, found in Mycobacterium bovis (strain ATCC BAA-935 / AF2122/97).